The following is a 508-amino-acid chain: Small ribosomal subunit protein uS3m (508 aa).

The protein belongs to the universal ribosomal protein uS3 family. In terms of assembly, component of the mitochondrial small ribosomal subunit (mt-SSU). Mature N.crassa 74S mitochondrial ribosomes consist of a small (37S) and a large (54S) subunit. The 37S small subunit contains a 16S ribosomal RNA (16S mt-rRNA) and 32 different proteins. The 54S large subunit contains a 23S rRNA (23S mt-rRNA) and 42 different proteins. uS3m, uS4m and uS5m form the narrow entry site of the mRNA channel.

The protein localises to the mitochondrion. Component of the mitochondrial ribosome (mitoribosome), a dedicated translation machinery responsible for the synthesis of mitochondrial genome-encoded proteins, including at least some of the essential transmembrane subunits of the mitochondrial respiratory chain. The mitoribosomes are attached to the mitochondrial inner membrane and translation products are cotranslationally integrated into the membrane. uS3m is essential for mitochondrial protein synthesis and required for the maturation of small ribosomal subunits. This Neurospora crassa (strain ATCC 24698 / 74-OR23-1A / CBS 708.71 / DSM 1257 / FGSC 987) protein is Small ribosomal subunit protein uS3m (var1).